The sequence spans 353 residues: Photosystem II D2 protein (353 aa).

N-acetylthreonine is present on T2. T2 is subject to Phosphothreonine. A helical transmembrane segment spans residues 41-61 (CAYFAVGGWFTGTTFVTSWYT). H118 serves as a coordination point for chlorophyll a. A helical membrane pass occupies residues 125 to 141 (GFMLRQFELARSVQLRP). Positions 130 and 143 each coordinate pheophytin a. The chain crosses the membrane as a helical span at residues 153-166 (VFVSVFLIYPLGQS). Position 198 (H198) interacts with chlorophyll a. A helical membrane pass occupies residues 208-228 (AALLCAIHGATVENTLFEDGD). Residues H215 and F262 each coordinate a plastoquinone. H215 serves as a coordination point for Fe cation. Position 269 (H269) interacts with Fe cation. Residues 279–295 (GLWMSALGVVGLALNLR) form a helical membrane-spanning segment.

The protein belongs to the reaction center PufL/M/PsbA/D family. As to quaternary structure, PSII is composed of 1 copy each of membrane proteins PsbA, PsbB, PsbC, PsbD, PsbE, PsbF, PsbH, PsbI, PsbJ, PsbK, PsbL, PsbM, PsbT, PsbX, PsbY, PsbZ, Psb30/Ycf12, at least 3 peripheral proteins of the oxygen-evolving complex and a large number of cofactors. It forms dimeric complexes. The D1/D2 heterodimer binds P680, chlorophylls that are the primary electron donor of PSII, and subsequent electron acceptors. It shares a non-heme iron and each subunit binds pheophytin, quinone, additional chlorophylls, carotenoids and lipids. There is also a Cl(-1) ion associated with D1 and D2, which is required for oxygen evolution. The PSII complex binds additional chlorophylls, carotenoids and specific lipids. is required as a cofactor.

It localises to the plastid. It is found in the chloroplast thylakoid membrane. The catalysed reaction is 2 a plastoquinone + 4 hnu + 2 H2O = 2 a plastoquinol + O2. Its function is as follows. Photosystem II (PSII) is a light-driven water:plastoquinone oxidoreductase that uses light energy to abstract electrons from H(2)O, generating O(2) and a proton gradient subsequently used for ATP formation. It consists of a core antenna complex that captures photons, and an electron transfer chain that converts photonic excitation into a charge separation. The D1/D2 (PsbA/PsbD) reaction center heterodimer binds P680, the primary electron donor of PSII as well as several subsequent electron acceptors. D2 is needed for assembly of a stable PSII complex. This Guizotia abyssinica (Niger) protein is Photosystem II D2 protein.